We begin with the raw amino-acid sequence, 273 residues long: Large ribosomal subunit protein uL2c (273 aa).

Disordered regions lie at residues 30–55 and 222–243; these read EKKL…RHRG and GSAM…PIGR. Positions 45-55 are enriched in basic residues; sequence NKGRITTRHRG.

It belongs to the universal ribosomal protein uL2 family. In terms of assembly, part of the 50S ribosomal subunit.

The protein localises to the plastid. The polypeptide is Large ribosomal subunit protein uL2c (rpl2) (Prototheca wickerhamii).